A 187-amino-acid chain; its full sequence is Protein GrpE (187 aa).

Residues 1-22 form a disordered region; sequence MADEQNLDAQAQDQAAEAGAGD. Residues 7–22 show a composition bias toward low complexity; sequence LDAQAQDQAAEAGAGD.

It belongs to the GrpE family. In terms of assembly, homodimer.

The protein resides in the cytoplasm. In terms of biological role, participates actively in the response to hyperosmotic and heat shock by preventing the aggregation of stress-denatured proteins, in association with DnaK and GrpE. It is the nucleotide exchange factor for DnaK and may function as a thermosensor. Unfolded proteins bind initially to DnaJ; upon interaction with the DnaJ-bound protein, DnaK hydrolyzes its bound ATP, resulting in the formation of a stable complex. GrpE releases ADP from DnaK; ATP binding to DnaK triggers the release of the substrate protein, thus completing the reaction cycle. Several rounds of ATP-dependent interactions between DnaJ, DnaK and GrpE are required for fully efficient folding. In Pseudomonas syringae pv. tomato (strain ATCC BAA-871 / DC3000), this protein is Protein GrpE.